The primary structure comprises 345 residues: L-threonine 3-dehydrogenase (345 aa).

Cys39 is a binding site for Zn(2+). Catalysis depends on charge relay system residues Thr41 and His44. Zn(2+) is bound by residues His64, Glu65, Cys94, Cys97, Cys100, and Cys108. NAD(+) is bound by residues Ile176, Asp196, Arg201, 263 to 265 (LGI), and 287 to 288 (VY).

This sequence belongs to the zinc-containing alcohol dehydrogenase family. As to quaternary structure, homotetramer. Requires Zn(2+) as cofactor.

The protein localises to the cytoplasm. It catalyses the reaction L-threonine + NAD(+) = (2S)-2-amino-3-oxobutanoate + NADH + H(+). It participates in amino-acid degradation; L-threonine degradation via oxydo-reductase pathway; glycine from L-threonine: step 1/2. Functionally, catalyzes the NAD(+)-dependent oxidation of L-threonine to 2-amino-3-ketobutyrate. This is L-threonine 3-dehydrogenase from Anaeromyxobacter sp. (strain K).